We begin with the raw amino-acid sequence, 1405 residues long: DNA-directed RNA polymerase subunit beta' (1405 aa).

Residues cysteine 70, cysteine 72, cysteine 85, and cysteine 88 each coordinate Zn(2+). Mg(2+) is bound by residues aspartate 460, aspartate 462, and aspartate 464. Zn(2+) is bound by residues cysteine 814, cysteine 888, cysteine 895, and cysteine 898.

The protein belongs to the RNA polymerase beta' chain family. As to quaternary structure, the RNAP catalytic core consists of 2 alpha, 1 beta, 1 beta' and 1 omega subunit. When a sigma factor is associated with the core the holoenzyme is formed, which can initiate transcription. Mg(2+) is required as a cofactor. The cofactor is Zn(2+).

It catalyses the reaction RNA(n) + a ribonucleoside 5'-triphosphate = RNA(n+1) + diphosphate. Its function is as follows. DNA-dependent RNA polymerase catalyzes the transcription of DNA into RNA using the four ribonucleoside triphosphates as substrates. The sequence is that of DNA-directed RNA polymerase subunit beta' from Shewanella sp. (strain ANA-3).